We begin with the raw amino-acid sequence, 357 residues long: Guanine nucleotide-binding protein alpha-1 subunit (357 aa).

G2 carries the N-myristoyl glycine lipid modification. C4 carries the S-palmitoyl cysteine lipid modification. In terms of domain architecture, G-alpha spans 32 to 357 (NVIKLLLLGA…SSKLKGCGLF (326 aa)). Residues 35-48 (KLLLLGAGESGKST) are G1 motif. The GTP site is built by E43, S44, G45, K46, S47, T48, D151, L176, T182, G204, N270, K271, D273, and A329. Mg(2+) is bound at residue S47. The G2 motif stretch occupies residues 174 to 182 (DILHTRVPT). T182 contributes to the Mg(2+) binding site. The tract at residues 197-206 (FRVFDVGGQR) is G3 motif. The G4 motif stretch occupies residues 266 to 273 (ILFLNKVD). The tract at residues 327 to 332 (TCATDT) is G5 motif.

It belongs to the G-alpha family. G(q) subfamily. In terms of assembly, g proteins are composed of 3 units; alpha, beta and gamma. The alpha chain contains the guanine nucleotide binding site. Requires Mg(2+) as cofactor.

Its function is as follows. Guanine nucleotide-binding proteins (G proteins) are involved as modulators or transducers in various transmembrane signaling systems. The protein is Guanine nucleotide-binding protein alpha-1 subunit (gpa-1) of Caenorhabditis briggsae.